Here is a 505-residue protein sequence, read N- to C-terminus: Glycerol kinase (505 aa).

Thr-14 contacts ADP. Thr-14, Thr-15, and Ser-16 together coordinate ATP. Position 14 (Thr-14) interacts with sn-glycerol 3-phosphate. Arg-18 lines the ADP pocket. Arg-84, Glu-85, Tyr-136, and Asp-246 together coordinate sn-glycerol 3-phosphate. Residues Arg-84, Glu-85, Tyr-136, Asp-246, and Gln-247 each contribute to the glycerol site. ADP is bound by residues Thr-268 and Gly-311. ATP-binding residues include Thr-268, Gly-311, Gln-315, and Gly-412. ADP contacts are provided by Gly-412 and Asn-416.

The protein belongs to the FGGY kinase family.

It carries out the reaction glycerol + ATP = sn-glycerol 3-phosphate + ADP + H(+). It functions in the pathway polyol metabolism; glycerol degradation via glycerol kinase pathway; sn-glycerol 3-phosphate from glycerol: step 1/1. With respect to regulation, inhibited by fructose 1,6-bisphosphate (FBP). Functionally, key enzyme in the regulation of glycerol uptake and metabolism. Catalyzes the phosphorylation of glycerol to yield sn-glycerol 3-phosphate. The chain is Glycerol kinase from Vibrio cholerae serotype O1 (strain ATCC 39315 / El Tor Inaba N16961).